The chain runs to 1621 residues: ALK tyrosine kinase receptor (1621 aa).

A signal peptide spans 1–18 (MGAAGFLWLLPPLLLAAA). Topologically, residues 19-1042 (SYSGAATDQR…PHLPLSLILS (1024 aa)) are extracellular. The interval 48–70 (RLQRKSLAVDFVVPSLFRVYARD) is heparin-binding region. Residues asparagine 174, asparagine 248, asparagine 289, asparagine 328, asparagine 415, asparagine 428, asparagine 449, asparagine 567, asparagine 575, asparagine 631, and asparagine 673 are each glycosylated (N-linked (GlcNAc...) asparagine). The MAM 1 domain maps to 268 to 431 (LECSFDFPCE…DFFALKNCSE (164 aa)). Residues 441–477 (LQSSFTCWNGTVLQLGQACDFHQDCAQGEDEGQLCSK) form the LDL-receptor class A domain. The 159-residue stretch at 482–640 (FYCNFENGFC…NISISLDCYL (159 aa)) folds into the MAM 2 domain. Cysteine 692 and cysteine 705 are oxidised to a cystine. N-linked (GlcNAc...) asparagine glycosylation occurs at asparagine 713. Residues cysteine 787 and cysteine 798 are joined by a disulfide bond. Residues asparagine 812, asparagine 868, and asparagine 890 are each glycosylated (N-linked (GlcNAc...) asparagine). Cysteine 910 and cysteine 932 are disulfide-bonded. An N-linked (GlcNAc...) asparagine glycan is attached at asparagine 990. 3 cysteine pairs are disulfide-bonded: cysteine 991–cysteine 999, cysteine 994–cysteine 1010, and cysteine 1012–cysteine 1025. The interval 991–1029 (CSHCEVDECHMDPESHKVICFCDHGTVLADDGVSCIVSP) is EGF-like. Residues 1043–1063 (VVTSALVAALVLAFSGIMIVY) traverse the membrane as a helical segment. The Cytoplasmic portion of the chain corresponds to 1064-1621 (RRKHQELQAM…SKNKVTQPGP (558 aa)). Residues tyrosine 1082, tyrosine 1096, and tyrosine 1100 each carry the phosphotyrosine modification. A Protein kinase domain is found at 1120 to 1396 (ITLIRGLGHG…IEYCTQDPDV (277 aa)). Residues 1126–1134 (LGHGAFGEV) and histidine 1128 contribute to the ATP site. Tyrosine 1135 is subject to Phosphotyrosine. Residues lysine 1154 and 1201–1203 (ELM) contribute to the ATP site. Aspartate 1253 serves as the catalytic Proton acceptor. Residue aspartate 1274 participates in ATP binding. Tyrosine 1282 is subject to Phosphotyrosine. A disordered region spans residues 1412–1556 (EEKVPMRPKD…WTGPGAGPRR (145 aa)). The span at 1414–1423 (KVPMRPKDPE) shows a compositional bias: basic and acidic residues. The span at 1441-1461 (SAAPQPAALTAPGPSVKKPPG) shows a compositional bias: low complexity. Gly residues predominate over residues 1462 to 1472 (AGAGAGAGAGA). Positions 1506 to 1518 (NKPTSLWNPTYGS) are enriched in polar residues. The residue at position 1516 (tyrosine 1516) is a Phosphotyrosine. A compositionally biased stretch (gly residues) spans 1543–1552 (AEGGWTGPGA).

Belongs to the protein kinase superfamily. Tyr protein kinase family. Insulin receptor subfamily. As to quaternary structure, homodimer; homodimerizes following heparin- and ligand-binding. Interacts with CBL, IRS1, PIK3R1 and PLCG1. Interacts with FRS2 and SHC1. Interacts with PTN and MDK. Post-translationally, phosphorylated at tyrosine residues by autocatalysis, which activates kinase activity. In cells not stimulated by a ligand, receptor protein tyrosine phosphatase beta and zeta complex (PTPRB/PTPRZ1) dephosphorylates ALK at the sites in ALK that are undergoing autophosphorylation through autoactivation. Mainly expressed in central nervous system (CNS) and other parts of the brain such as the paraventricular nucleus (PVN) of the hypothalamus. Expression is also found in peripheral nervous systems, eye, nasal epithelium, olfactory nerve, tongue, skin, tissue surrounding the esophagus, stomach, midgut, as well as testis and ovary.

The protein localises to the cell membrane. It carries out the reaction L-tyrosyl-[protein] + ATP = O-phospho-L-tyrosyl-[protein] + ADP + H(+). With respect to regulation, activated upon ALKAL2 ligand-binding. ALKAL2-driven activation is coupled with heparin-binding. Following ligand-binding, homodimerizes and autophosphorylates, activating its kinase activity. Inactivated through dephosphorylation by receptor protein tyrosine phosphatase beta and zeta complex (PTPRB/PTPRZ1) when there is no stimulation by a ligand. Its function is as follows. Neuronal receptor tyrosine kinase that is essentially and transiently expressed in specific regions of the central and peripheral nervous systems and plays an important role in the genesis and differentiation of the nervous system. Also acts as a key thinness protein involved in the resistance to weight gain: in hypothalamic neurons, controls energy expenditure acting as a negative regulator of white adipose tissue lipolysis and sympathetic tone to fine-tune energy homeostasis. Following activation by ALKAL2 ligand at the cell surface, transduces an extracellular signal into an intracellular response. In contrast, ALKAL1 is not a potent physiological ligand for ALK. Ligand-binding to the extracellular domain induces tyrosine kinase activation, leading to activation of the mitogen-activated protein kinase (MAPK) pathway. Phosphorylates almost exclusively at the first tyrosine of the Y-x-x-x-Y-Y motif. Induces tyrosine phosphorylation of CBL, FRS2, IRS1 and SHC1, as well as of the MAP kinases MAPK1/ERK2 and MAPK3/ERK1. ALK activation may also be regulated by pleiotrophin (PTN) and midkine (MDK). PTN-binding induces MAPK pathway activation, which is important for the anti-apoptotic signaling of PTN and regulation of cell proliferation. MDK-binding induces phosphorylation of the ALK target insulin receptor substrate (IRS1), activates mitogen-activated protein kinases (MAPKs) and PI3-kinase, resulting also in cell proliferation induction. Drives NF-kappa-B activation, probably through IRS1 and the activation of the AKT serine/threonine kinase. Recruitment of IRS1 to activated ALK and the activation of NF-kappa-B are essential for the autocrine growth and survival signaling of MDK. In Mus musculus (Mouse), this protein is ALK tyrosine kinase receptor.